A 695-amino-acid chain; its full sequence is Elongation factor G (695 aa).

The tr-type G domain occupies 12 to 286 (DKIRNIGIMA…AVIDYLPSPL (275 aa)). Residues 21 to 28 (AHIDAGKT), 85 to 89 (DTPGH), and 139 to 142 (NKMD) each bind GTP.

This sequence belongs to the TRAFAC class translation factor GTPase superfamily. Classic translation factor GTPase family. EF-G/EF-2 subfamily.

The protein localises to the cytoplasm. Catalyzes the GTP-dependent ribosomal translocation step during translation elongation. During this step, the ribosome changes from the pre-translocational (PRE) to the post-translocational (POST) state as the newly formed A-site-bound peptidyl-tRNA and P-site-bound deacylated tRNA move to the P and E sites, respectively. Catalyzes the coordinated movement of the two tRNA molecules, the mRNA and conformational changes in the ribosome. This is Elongation factor G from Thermotoga neapolitana (strain ATCC 49049 / DSM 4359 / NBRC 107923 / NS-E).